The chain runs to 1381 residues: Peroxisomal ATPase PEX6 (1381 aa).

Residues 1–10 (MTAPNSTPAS) are compositionally biased toward polar residues. Disordered regions lie at residues 1–23 (MTAP…QDKP), 247–315 (VRTS…DNLS), 333–374 (TVTG…DRPR), and 467–499 (YSSR…NPPA). Residues 11–20 (SRKRVRRRRQ) show a composition bias toward basic residues. Composition is skewed to acidic residues over residues 270-284 (AEDD…AEED) and 296-315 (TDAD…DNLS). Polar residues-rich tracts occupy residues 333-345 (TVTG…TGTP), 355-367 (GPGS…TATT), and 487-499 (FFEA…NPPA). 1031-1038 (GPPGTGKT) provides a ligand contact to ATP. 2 stretches are compositionally biased toward basic and acidic residues: residues 1294 to 1305 (GAKDKDKKKEGA) and 1337 to 1350 (STKK…KAAD). Residues 1294–1381 (GAKDKDKKKE…GGDEDEGLYD (88 aa)) form a disordered region. Over residues 1372 to 1381 (GGDEDEGLYD) the composition is skewed to acidic residues.

This sequence belongs to the AAA ATPase family. As to quaternary structure, interacts with PEX1; forming the PEX1-PEX6 AAA ATPase complex, which is composed of a heterohexamer formed by a trimer of PEX1-PEX6 dimers.

It is found in the cytoplasm. The protein localises to the cytosol. It localises to the peroxisome membrane. It catalyses the reaction ATP + H2O = ADP + phosphate + H(+). Its function is as follows. Component of the PEX1-PEX6 AAA ATPase complex, a protein dislocase complex that mediates the ATP-dependent extraction of the PEX5 receptor from peroxisomal membranes, an essential step for PEX5 recycling. Specifically recognizes PEX5 monoubiquitinated at 'Cys-6', and pulls it out of the peroxisome lumen through the PEX2-PEX10-PEX12 retrotranslocation channel. Extraction by the PEX1-PEX6 AAA ATPase complex is accompanied by unfolding of the TPR repeats and release of bound cargo from PEX5. The protein is Peroxisomal ATPase PEX6 (pex-6) of Neurospora crassa (strain ATCC 24698 / 74-OR23-1A / CBS 708.71 / DSM 1257 / FGSC 987).